The sequence spans 283 residues: Phosphate import ATP-binding protein PstB 2 (283 aa).

An ABC transporter domain is found at 36 to 278; that stretch reads LQVKQFNFYY…PKKKQTEDYI (243 aa). Position 69–76 (69–76) interacts with ATP; that stretch reads GPSGCGKS.

Belongs to the ABC transporter superfamily. Phosphate importer (TC 3.A.1.7) family. As to quaternary structure, the complex is composed of two ATP-binding proteins (PstB), two transmembrane proteins (PstC and PstA) and a solute-binding protein (PstS).

Its subcellular location is the cell inner membrane. The catalysed reaction is phosphate(out) + ATP + H2O = ADP + 2 phosphate(in) + H(+). In terms of biological role, part of the ABC transporter complex PstSACB involved in phosphate import. Responsible for energy coupling to the transport system. In Nitrosococcus oceani (strain ATCC 19707 / BCRC 17464 / JCM 30415 / NCIMB 11848 / C-107), this protein is Phosphate import ATP-binding protein PstB 2.